The primary structure comprises 380 residues: Cytochrome b (380 aa).

The next 4 membrane-spanning stretches (helical) occupy residues 34–54 (FGSLLGICLLTQILTGLLLAT), 78–99 (WLIRNLHANGASFFFICIYLHI), 114–134 (WNTGVILLLALMATAFVGYVL), and 179–199 (FFALHFLLPFMIAGLAFIHLT). The heme b site is built by His84 and His98. 2 residues coordinate heme b: His183 and His197. His202 provides a ligand contact to a ubiquinone. A run of 4 helical transmembrane segments spans residues 227–247 (LKDILGFIIMFLPLTTLALFS), 289–309 (LGGVLALAASVLVLFLTPLLH), 321–341 (LSQLLFWTLVANLLILTWVGS), and 348–368 (FIIIGQLASLTYFTILLLLFP).

It belongs to the cytochrome b family. As to quaternary structure, the cytochrome bc1 complex contains 11 subunits: 3 respiratory subunits (MT-CYB, CYC1 and UQCRFS1), 2 core proteins (UQCRC1 and UQCRC2) and 6 low-molecular weight proteins (UQCRH/QCR6, UQCRB/QCR7, UQCRQ/QCR8, UQCR10/QCR9, UQCR11/QCR10 and a cleavage product of UQCRFS1). This cytochrome bc1 complex then forms a dimer. Requires heme b as cofactor.

The protein localises to the mitochondrion inner membrane. Functionally, component of the ubiquinol-cytochrome c reductase complex (complex III or cytochrome b-c1 complex) that is part of the mitochondrial respiratory chain. The b-c1 complex mediates electron transfer from ubiquinol to cytochrome c. Contributes to the generation of a proton gradient across the mitochondrial membrane that is then used for ATP synthesis. The sequence is that of Cytochrome b (MT-CYB) from Uria aalge (Common mure).